The sequence spans 191 residues: Programmed cell death protein 6 (191 aa).

Ala-2 carries the post-translational modification N-acetylalanine. EF-hand domains lie at 23–58 (PDQSFLWNVFQRVDKDRSGVISDNELQQALSNGTWT), 59–89 (PFNPVTVRSIISMFDRENKAGVNFSEFTGVW), 90–125 (KYITDWQNVFRTYDRDNSGMIDKHELKQALSGFGYR), 126–161 (LSDQFHDILIRKFDRQGRGQIAFDDFIQGCIVLQRL), and 162–191 (TDIFRRYDTDQDGWIQVSYEQYLSMVFSIV). 5 residues coordinate Ca(2+): Asp-36, Asp-38, Ser-40, Val-42, and Glu-47. 5 residues coordinate Ca(2+): Asp-103, Asp-105, Ser-107, Met-109, and Glu-114. 4 residues coordinate Mg(2+): Asp-169, Asp-171, Asp-173, and Trp-175.

Homodimer and heterodimer; heterodimerizes (via the EF-hand 5) with PEF1. Isoform 1 and isoform 2 self-associate; probably forming homodimers. Interacts with CPNE4 (via VWFA domain). Interacts with PDCD6IP; the interaction is calcium-dependent. Interacts with RBM22. Interacts with PLSCR4. Interacts with ANXA7 and TSG101. Interacts with DAPK1. Interacts with SEC31A; the interaction is calcium-dependent and promotes monoubiquitination of SEC31A. Interacts with ANXA11 (via N-terminus); the interaction is calcium-dependent. Interacts with PLSCR3 (via N-terminus); the interaction is calcium-dependent. Interacts with MCOLN1; the interaction is calcium-dependent. Interacts with KDR; the interaction is calcium-dependent. Interacts with HEBP2; the interaction is calcium-dependent. Interacts with TFG. Isoform 1: Interacts with SHISA5, leading to stabilize it. Isoform 2: Does not interact with SHISA5. Isoform 2: Does not interact with PDCD6IP, TSG101, ANXA7 and ANXA11.

Its subcellular location is the endoplasmic reticulum membrane. The protein localises to the cytoplasmic vesicle. It is found in the COPII-coated vesicle membrane. The protein resides in the cytoplasm. It localises to the nucleus. Its subcellular location is the endosome. In terms of biological role, calcium sensor that plays a key role in processes such as endoplasmic reticulum (ER)-Golgi vesicular transport, endosomal biogenesis or membrane repair. Acts as an adapter that bridges unrelated proteins or stabilizes weak protein-protein complexes in response to calcium: calcium-binding triggers exposure of apolar surface, promoting interaction with different sets of proteins thanks to 3 different hydrophobic pockets, leading to translocation to membranes. Involved in ER-Golgi transport. Regulates ER-Golgi transport by promoting the association between PDCD6IP and TSG101, thereby bridging together the ESCRT-III and ESCRT-I complexes. Together with PEF1, acts as a calcium-dependent adapter for the BCR(KLHL12) complex, a complex involved in ER-Golgi transport by regulating the size of COPII coats. In response to cytosolic calcium increase, the heterodimer formed with PEF1 interacts with, and bridges together the BCR(KLHL12) complex and SEC31 (SEC31A or SEC31B), promoting monoubiquitination of SEC31 and subsequent collagen export, which is required for neural crest specification. Involved in the regulation of the distribution and function of MCOLN1 in the endosomal pathway. Promotes localization and polymerization of TFG at endoplasmic reticulum exit site. Required for T-cell receptor-, Fas-, and glucocorticoid-induced apoptosis. May mediate Ca(2+)-regulated signals along the death pathway: interaction with DAPK1 can accelerate apoptotic cell death by increasing caspase-3 activity. Its role in apoptosis may however be indirect, as suggested by knockout experiments. May inhibit KDR/VEGFR2-dependent angiogenesis; the function involves inhibition of VEGF-induced phosphorylation of the Akt signaling pathway. Its function is as follows. Has a lower Ca(2+) affinity than isoform 1. The polypeptide is Programmed cell death protein 6 (Rattus norvegicus (Rat)).